The chain runs to 174 residues: Sarcoplasmic calcium-binding protein (174 aa).

Residue Ser1 is modified to N-acetylserine. 4 consecutive EF-hand domains span residues 3 to 38, 55 to 90, 91 to 126, and 127 to 160; these read LWVQKMKTYFNRIDFDKDGAITRMDFESMAERFAKE, GVWDNFLTAVAGGKGIDETTFINSMKEMVKNPEAKS, VVEGPLPLFFRAVDTNEDNNISRDEYGIFFGMLGLD, and KTMAPASFDAIDTNNDGLLSLEEFVIAGSDFFMN. Residues Asp16, Asp18, Asp20, and Asp27 each coordinate Ca(2+). Residues Asp104, Asn106, Asp108, Asn110, Glu115, Asp138, Asn140, Asp142, and Glu149 each coordinate Ca(2+).

Functionally, like parvalbumins, SCPs seem to be more abundant in fast contracting muscles, but no functional relationship can be established from this distribution. The protein is Sarcoplasmic calcium-binding protein of Hediste diversicolor (Sandworm).